We begin with the raw amino-acid sequence, 649 residues long: UvrABC system protein B (649 aa).

Positions E25–M178 constitute a Helicase ATP-binding domain. Residue G38 to T45 participates in ATP binding. The short motif at Y91–I114 is the Beta-hairpin element. Residues Q428–K594 enclose the Helicase C-terminal domain. A UVR domain is found at D614–E649.

The protein belongs to the UvrB family. In terms of assembly, forms a heterotetramer with UvrA during the search for lesions. Interacts with UvrC in an incision complex.

The protein resides in the cytoplasm. The UvrABC repair system catalyzes the recognition and processing of DNA lesions. A damage recognition complex composed of 2 UvrA and 2 UvrB subunits scans DNA for abnormalities. Upon binding of the UvrA(2)B(2) complex to a putative damaged site, the DNA wraps around one UvrB monomer. DNA wrap is dependent on ATP binding by UvrB and probably causes local melting of the DNA helix, facilitating insertion of UvrB beta-hairpin between the DNA strands. Then UvrB probes one DNA strand for the presence of a lesion. If a lesion is found the UvrA subunits dissociate and the UvrB-DNA preincision complex is formed. This complex is subsequently bound by UvrC and the second UvrB is released. If no lesion is found, the DNA wraps around the other UvrB subunit that will check the other stand for damage. The protein is UvrABC system protein B of Methanosphaera stadtmanae (strain ATCC 43021 / DSM 3091 / JCM 11832 / MCB-3).